The primary structure comprises 86 residues: Large ribosomal subunit protein uL23 (86 aa).

Belongs to the universal ribosomal protein uL23 family. Part of the 50S ribosomal subunit. Contacts protein L29.

Functionally, binds to 23S rRNA. One of the proteins that surrounds the polypeptide exit tunnel on the outside of the ribosome. The chain is Large ribosomal subunit protein uL23 from Pyrococcus abyssi (strain GE5 / Orsay).